The following is a 141-amino-acid chain: Cystatin-S (141 aa).

The first 20 residues, 1 to 20, serve as a signal peptide directing secretion; sequence MARPLCTLLLLMATLAGALA. A phosphoserine mark is found at serine 21 and serine 23. Positions 76–80 match the Secondary area of contact motif; the sequence is QTFGG. Disulfide bonds link cysteine 94–cysteine 104 and cysteine 118–cysteine 138.

Belongs to the cystatin family. Phosphorylated at both its N- and C-terminal regions. As to expression, expressed in submandibular and sublingual saliva but not in parotid saliva (at protein level). Expressed in saliva, tears, urine and seminal fluid.

The protein localises to the secreted. Its function is as follows. This protein strongly inhibits papain and ficin, partially inhibits stem bromelain and bovine cathepsin C, but does not inhibit porcine cathepsin B or clostripain. Papain is inhibited non-competitively. This chain is Cystatin-S (CST4), found in Homo sapiens (Human).